The chain runs to 283 residues: CDP-abequose synthase (283 aa).

Residues 7 to 13, 48 to 49, Y129, and K133 contribute to the NAD(+) site; these read GGSGYIG and EF. The Proton acceptor role is filled by Y129.

Belongs to the NAD(P)-dependent epimerase/dehydratase family.

The catalysed reaction is CDP-alpha-D-abequose + NADP(+) = CDP-4-dehydro-3,6-dideoxy-alpha-D-glucose + NADPH + H(+). Its pathway is bacterial outer membrane biogenesis; LPS O-antigen biosynthesis. In terms of biological role, the CDP-abequose synthase is involved in lipopolysaccharides (LPS) synthesis containing abequose which are important antigens of the cell surface responsible for the serological O specificity. Derivatives of the 3,6-dideoxyhexose group have a particular highly immunogenic character. This Yersinia pseudotuberculosis protein is CDP-abequose synthase (rfbJ).